A 376-amino-acid chain; its full sequence is Queuine tRNA-ribosyltransferase (376 aa).

The active-site Proton acceptor is the Asp89. Substrate is bound by residues 89–93 (DSGGF), Asp143, Gln194, and Gly221. Residues 252–258 (GVGLPSN) form an RNA binding region. Asp271 acts as the Nucleophile in catalysis. An RNA binding; important for wobble base 34 recognition region spans residues 276–280 (ARNGR). Zn(2+)-binding residues include Cys309, Cys311, Cys314, and His340.

Belongs to the queuine tRNA-ribosyltransferase family. As to quaternary structure, homodimer. Within each dimer, one monomer is responsible for RNA recognition and catalysis, while the other monomer binds to the replacement base PreQ1. Zn(2+) is required as a cofactor.

It carries out the reaction 7-aminomethyl-7-carbaguanine + guanosine(34) in tRNA = 7-aminomethyl-7-carbaguanosine(34) in tRNA + guanine. Its pathway is tRNA modification; tRNA-queuosine biosynthesis. In terms of biological role, catalyzes the base-exchange of a guanine (G) residue with the queuine precursor 7-aminomethyl-7-deazaguanine (PreQ1) at position 34 (anticodon wobble position) in tRNAs with GU(N) anticodons (tRNA-Asp, -Asn, -His and -Tyr). Catalysis occurs through a double-displacement mechanism. The nucleophile active site attacks the C1' of nucleotide 34 to detach the guanine base from the RNA, forming a covalent enzyme-RNA intermediate. The proton acceptor active site deprotonates the incoming PreQ1, allowing a nucleophilic attack on the C1' of the ribose to form the product. After dissociation, two additional enzymatic reactions on the tRNA convert PreQ1 to queuine (Q), resulting in the hypermodified nucleoside queuosine (7-(((4,5-cis-dihydroxy-2-cyclopenten-1-yl)amino)methyl)-7-deazaguanosine). The protein is Queuine tRNA-ribosyltransferase of Clostridium tetani (strain Massachusetts / E88).